The chain runs to 840 residues: Lethal(3)malignant brain tumor-like protein 1 (840 aa).

Ser-117 carries the post-translational modification Phosphoserine. Residues 127–269 form a disordered region; it reads EYEDGGAPAG…WSSSQPATGE (143 aa). Over residues 156–165 the composition is skewed to acidic residues; the sequence is PNQDPPEDDS. The span at 200 to 210 shows a compositional bias: polar residues; the sequence is VENSSGSTSAS. A compositionally biased stretch (basic and acidic residues) spans 236–247; sequence AMEKQEEGKDPE. A compositionally biased stretch (polar residues) spans 250 to 266; it reads PTASTPESEEWSSSQPA. 3 MBT repeats span residues 274–374, 382–481, and 490–585; these read WSWE…LQPP, FSWS…LTPP, and FCWE…LQPP. An interaction with monomethylated and dimethylated peptides region spans residues 447–454; sequence FDNWDDTY. The disordered stretch occupies residues 580-605; sequence HPLQPPLGPREPSSASPGGCPPLSYR. The CCHHC-type zinc-finger motif lies at 613–656; the sequence is SKYSFHHRKCPTPGCDGSGHVTGKFTAHHCLSGCPLAERNQSRL. Residues Cys-622, Cys-627, His-640, and Cys-646 each contribute to the Zn(2+) site. A disordered region spans residues 657 to 697; that stretch reads KAELSDSEASARKKNLSGFSPRKKPRHHGRIGRPPKYRKIP. The segment covering 677 to 695 has biased composition (basic residues); that stretch reads PRKKPRHHGRIGRPPKYRK.

In terms of assembly, homodimer. Interacts with RB1/RB (when monomethylated at 'Lys-860'). Interacts with p53/TP53 (when monomethylated at 'Lys-382'). Interacts with CBX3, ETV6, KMT5A and VCP/p97. In terms of processing, ubiquitinated in a VCP/p97-dependent way following DNA damage, leading to its removal from DNA damage sites, promoting accessibility of H4K20me2 mark for DNA repair protein TP53BP1, which is then recruited to DNA damage sites. In terms of tissue distribution, widely expressed. Expression is reduced in colorectal cancer cell line SW480 and promyelocytic leukemia cell line HL-60.

The protein resides in the nucleus. Polycomb group (PcG) protein that specifically recognizes and binds mono- and dimethyllysine residues on target proteins, thereby acting as a 'reader' of a network of post-translational modifications. PcG proteins maintain the transcriptionally repressive state of genes: acts as a chromatin compaction factor by recognizing and binding mono- and dimethylated histone H1b/H1-4 at 'Lys-26' (H1bK26me1 and H1bK26me2) and histone H4 at 'Lys-20' (H4K20me1 and H4K20me2), leading to condense chromatin and repress transcription. Recognizes and binds p53/TP53 monomethylated at 'Lys-382', leading to repress p53/TP53-target genes. Also recognizes and binds RB1/RB monomethylated at 'Lys-860'. Participates in the ETV6-mediated repression. Probably plays a role in cell proliferation. Overexpression induces multinucleated cells, suggesting that it is required to accomplish normal mitosis. In Homo sapiens (Human), this protein is Lethal(3)malignant brain tumor-like protein 1 (L3MBTL1).